The sequence spans 180 residues: NADH-quinone oxidoreductase subunit I 1 (180 aa).

2 4Fe-4S ferredoxin-type domains span residues 50–80 and 90–119; these read LSRDPDGEERCVACNLCAVACPVDCIALQKT and EFFRINFSRCIFCGFCEEACPTYAIQLTPD. [4Fe-4S] cluster-binding residues include cysteine 60, cysteine 63, cysteine 66, cysteine 70, cysteine 99, cysteine 102, cysteine 105, and cysteine 109.

It belongs to the complex I 23 kDa subunit family. In terms of assembly, NDH-1 is composed of 14 different subunits. Subunits NuoA, H, J, K, L, M, N constitute the membrane sector of the complex. [4Fe-4S] cluster serves as cofactor.

The protein resides in the cell inner membrane. The enzyme catalyses a quinone + NADH + 5 H(+)(in) = a quinol + NAD(+) + 4 H(+)(out). Its function is as follows. NDH-1 shuttles electrons from NADH, via FMN and iron-sulfur (Fe-S) centers, to quinones in the respiratory chain. The immediate electron acceptor for the enzyme in this species is believed to be ubiquinone. Couples the redox reaction to proton translocation (for every two electrons transferred, four hydrogen ions are translocated across the cytoplasmic membrane), and thus conserves the redox energy in a proton gradient. This is NADH-quinone oxidoreductase subunit I 1 from Nitrosococcus oceani (strain ATCC 19707 / BCRC 17464 / JCM 30415 / NCIMB 11848 / C-107).